The primary structure comprises 422 residues: MDSILVKGNGELRGQIPIAGAKNACLALMPATLLSDEPLTLTNAPRLSDIRTMTQLLQSLGAEVASLQGGQVLALSSHALTDHRADYDIVRKMRASILVLGPMLARDGHAVVSLPGGCAIGARPVDLHLKALEAMGADLDLRDGYIHAKAPAGGLRGARVAFPIVSVGATENALMAATLAKGTTVLENAAREPEIVDLARCLRRMGAQIEGEGSATITVQGVDRLGGATHPVVTDRIELGTYMLAPAICGGEVELLGGRIELVGAFCEKLDAAGISVEETERGLRVARRNGRVKAVDVTTEPFPGFPTDLQAQMMALLCTAEGTSVLEEKIFENRFMHAPELTRMGARIEVHGGTARVTGVEKLRGAPVMATDLRASVSLILAGLAAEGETVVSRVYHLDRGYERVEEKLSACGAQIRRIPG.

Residue 22 to 23 participates in phosphoenolpyruvate binding; that stretch reads KN. Residue Arg94 participates in UDP-N-acetyl-alpha-D-glucosamine binding. Catalysis depends on Cys118, which acts as the Proton donor. Cys118 is subject to 2-(S-cysteinyl)pyruvic acid O-phosphothioketal. UDP-N-acetyl-alpha-D-glucosamine contacts are provided by residues 123–127, Asp309, and Ile331; that span reads RPVDL.

The protein belongs to the EPSP synthase family. MurA subfamily.

It is found in the cytoplasm. The catalysed reaction is phosphoenolpyruvate + UDP-N-acetyl-alpha-D-glucosamine = UDP-N-acetyl-3-O-(1-carboxyvinyl)-alpha-D-glucosamine + phosphate. Its pathway is cell wall biogenesis; peptidoglycan biosynthesis. Its function is as follows. Cell wall formation. Adds enolpyruvyl to UDP-N-acetylglucosamine. This Cereibacter sphaeroides (strain ATCC 17025 / ATH 2.4.3) (Rhodobacter sphaeroides) protein is UDP-N-acetylglucosamine 1-carboxyvinyltransferase.